Consider the following 396-residue polypeptide: Methionine import ATP-binding protein MetN 2 (396 aa).

Positions 41-280 (VSFELVGKVF…PRHGATRALL (240 aa)) constitute an ABC transporter domain. Position 77-84 (77-84 (GRSGAGKS)) interacts with ATP.

The protein belongs to the ABC transporter superfamily. Methionine importer (TC 3.A.1.24) family. The complex is composed of two ATP-binding proteins (MetN), two transmembrane proteins (MetI) and a solute-binding protein (MetQ).

The protein localises to the cell inner membrane. The catalysed reaction is L-methionine(out) + ATP + H2O = L-methionine(in) + ADP + phosphate + H(+). It catalyses the reaction D-methionine(out) + ATP + H2O = D-methionine(in) + ADP + phosphate + H(+). In terms of biological role, part of the ABC transporter complex MetNIQ involved in methionine import. Responsible for energy coupling to the transport system. The protein is Methionine import ATP-binding protein MetN 2 of Burkholderia mallei (strain ATCC 23344).